The chain runs to 254 residues: Uracil-DNA glycosylase (254 aa).

The Proton acceptor role is filled by aspartate 91.

Belongs to the uracil-DNA glycosylase (UDG) superfamily. UNG family.

It is found in the host nucleus. The catalysed reaction is Hydrolyzes single-stranded DNA or mismatched double-stranded DNA and polynucleotides, releasing free uracil.. Its function is as follows. Excises uracil residues from the DNA which can arise as a result of misincorporation of dUMP residues by DNA polymerase or deamination of cytosines. Therefore may reduce deleterious uracil incorporation into the viral genome, particularly in terminally differentiated cells which lack DNA repair enzymes. This chain is Uracil-DNA glycosylase (U81), found in Homo sapiens (Human).